The primary structure comprises 577 residues: Cleavage stimulation factor subunit 2 (577 aa).

Position 14 is a phosphoserine (Ser-14). The region spanning 16-94 (RSVFVGNIPY…RALRVDNAAS (79 aa)) is the RRM domain. Residues 108 to 248 (APVIESPYGE…VNGAPPLMQA (141 aa)) form an interactions with CSTF3 and SYMPK region. Lys-189 participates in a covalent cross-link: Glycyl lysine isopeptide (Lys-Gly) (interchain with G-Cter in SUMO2). Residues 206–243 (QPVHGAGPGSGSNVSMNQQNPQAPQAQSLGGMHVNGAP) are disordered. A compositionally biased stretch (low complexity) spans 222-232 (NQQNPQAPQAQ). At Arg-308 the chain carries Omega-N-methylarginine. Positions 340-409 (EVEPRGYLGP…DGRGGRDPRG (70 aa)) are disordered. Residues 360–373 (PGHESRGPPPHELR) are compositionally biased toward basic and acidic residues. One copy of the 1; approximate repeat lies at 410 to 414 (IDARG). Residues 410 to 469 (IDARGMEARAMEARGLDARGLEARAMEARAMEARAMEARAMEARAMEVRGMEARGMDTRG) are 12 X 5 AA tandem repeats of M-E-A-R-[AG]. 2 consecutive repeat copies span residues 415 to 419 (MEARA) and 420 to 424 (MEARG). The stretch at 425–429 (LDARG) is one 4; approximate repeat. One copy of the 5; approximate repeat lies at 430–434 (LEARA). A run of 4 repeats spans residues 435–439 (MEARA), 440–444 (MEARA), 445–449 (MEARA), and 450–454 (MEARA). The stretch at 455–459 (MEVRG) is one 10; approximate repeat. Residues 460–464 (MEARG) form repeat 11. A 12; approximate repeat occupies 465-469 (MDTRG). Arg-468 and Arg-475 each carry omega-N-methylarginine. The segment at 508–532 (GMQGASIQGGSQPGGFSPGQNQVTP) is disordered. The tract at residues 514–577 (IQGGSQPGGF…EQIQKSTGAP (64 aa)) is interaction with RPO2TC1. Phosphoserine is present on residues Ser-518 and Ser-524.

The CSTF complex is composed of CSTF1 (50 kDa subunit), CSTF2 (64 kDa subunit) and CSTF3 (77 kDa subunit). CSTF2 directly interacts with CSTF3, SYMPK and RPO2TC1. Interacts with HSF1 in heat-stressed cells. Interacts with CPSF2, CPSF3 and FIP1L1. Interacts with DDX1.

It is found in the nucleus. Its function is as follows. One of the multiple factors required for polyadenylation and 3'-end cleavage of mammalian pre-mRNAs. This subunit is directly involved in the binding to pre-mRNAs. The polypeptide is Cleavage stimulation factor subunit 2 (CSTF2) (Homo sapiens (Human)).